Reading from the N-terminus, the 386-residue chain is 8-amino-7-oxononanoate synthase (386 aa).

Position 19 (Arg-19) interacts with substrate. Gly-106–Tyr-107 contacts pyridoxal 5'-phosphate. His-131 contacts substrate. 3 residues coordinate pyridoxal 5'-phosphate: Ser-177, His-205, and Thr-233. Lys-236 bears the N6-(pyridoxal phosphate)lysine mark. Residue Thr-350 participates in substrate binding.

The protein belongs to the class-II pyridoxal-phosphate-dependent aminotransferase family. BioF subfamily. In terms of assembly, homodimer. Pyridoxal 5'-phosphate is required as a cofactor.

It catalyses the reaction 6-carboxyhexanoyl-[ACP] + L-alanine + H(+) = (8S)-8-amino-7-oxononanoate + holo-[ACP] + CO2. The protein operates within cofactor biosynthesis; biotin biosynthesis. In terms of biological role, catalyzes the decarboxylative condensation of pimeloyl-[acyl-carrier protein] and L-alanine to produce 8-amino-7-oxononanoate (AON), [acyl-carrier protein], and carbon dioxide. The protein is 8-amino-7-oxononanoate synthase of Alcanivorax borkumensis (strain ATCC 700651 / DSM 11573 / NCIMB 13689 / SK2).